The sequence spans 1143 residues: Probable ATP-dependent RNA helicase DHX34 (1143 aa).

2 disordered regions span residues 1–24 and 75–94; these read MPPPRTREGRDRRDHHRAPSEEEA and TSRKEEKDPGQPKHSIPALA. Over residues 76 to 85 the composition is skewed to basic and acidic residues; sequence SRKEEKDPGQ. The Helicase ATP-binding domain occupies 172-332; sequence LQTLKEHQVV…FSNAPVVQVP (161 aa). ATP is bound at residue 185 to 192; it reads GDTGCGKS. Residues 279–282 carry the DEAH box motif; sequence DEVH. Residues 368–536 form the Helicase C-terminal domain; the sequence is SIDHKYPPEE…SLVLQMKSMS (169 aa). Residues 701-955 are negatively regulates interaction with UPF1; the sequence is QAAQVGDSYS…LRARWESALD (255 aa). The segment at 724–766 is disordered; the sequence is LKRQHEEGAGRRRKVLRLQEEQDGGSSDEDRAGPAPPGASDGV. S749 and S750 each carry phosphoserine. The required for phosphorylation of UPF1. Not required for interaction with UPF1 stretch occupies residues 810-1143; the sequence is PQLAVPDAFN…EVLRHRKQHV (334 aa). A required for the interaction with SMG1 and subsequent phosphorylation of UPF1 region spans residues 957 to 1143; the sequence is QLAHQAQQQL…EVLRHRKQHV (187 aa).

The protein belongs to the DEAD box helicase family. DEAH subfamily. Forms a complex with RUVBL1 and RUVBL2. Part of a complex composed of SMG1, DHX34 and UPF1; within the complex DHX34 acts as a scaffolding protein to facilitate SMG1 phosphorylation of UPF1. Interacts with UPF1, MOV10, EIF4A3, XRN2, SMG6, SMG7, SMG9, UPF3A, UPF3B, CASC3/MLN51, XRN1, DIS3 and DCP1A; the interactions are RNA-independent. Interacts with NCBP1/CPB80; the interaction is RNA-dependent. Interacts (via C-terminus) with SMG1; the interaction is RNA-independent. In terms of tissue distribution, expressed in whole blood, testis and spleen. Also expressed in the brain.

The enzyme catalyses ATP + H2O = ADP + phosphate + H(+). Its function is as follows. Probable ATP-binding RNA helicase required for nonsense-mediated decay (NMD) degradation of mRNA transcripts containing premature stop codons. Promotes the phosphorylation of UPF1 along with its interaction with key NMD pathway proteins UPF2 and EIF4A3. Interaction with the RUVBL1-RUVBL2 complex results in loss of nucleotide binding ability and ATP hydrolysis of the complex. Negatively regulates the nucleotide binding ability and ATP hydrolysis of the RUVBL1-RUVBL2 complex via induction of N-terminus conformation changes of the RUVBL2 subunits. The sequence is that of Probable ATP-dependent RNA helicase DHX34 from Homo sapiens (Human).